A 321-amino-acid polypeptide reads, in one-letter code: Methionine import ATP-binding protein MetN (321 aa).

The 236-residue stretch at 2-237 folds into the ABC transporter domain; the sequence is ISIKNVNKYY…NTKGLRKLIG (236 aa). 34–41 is a binding site for ATP; it reads GHSGAGKS.

It belongs to the ABC transporter superfamily. Methionine importer (TC 3.A.1.24) family. As to quaternary structure, the complex is composed of two ATP-binding proteins (MetN), two transmembrane proteins (MetI) and a solute-binding protein (MetQ).

The protein localises to the cell membrane. It carries out the reaction L-methionine(out) + ATP + H2O = L-methionine(in) + ADP + phosphate + H(+). It catalyses the reaction D-methionine(out) + ATP + H2O = D-methionine(in) + ADP + phosphate + H(+). Functionally, part of the ABC transporter complex MetNIQ involved in methionine import. Responsible for energy coupling to the transport system. The sequence is that of Methionine import ATP-binding protein MetN from Clostridioides difficile (strain 630) (Peptoclostridium difficile).